The primary structure comprises 264 residues: Forkhead box protein pes-1 (264 aa).

Disordered regions lie at residues 15-36 (DLDNCSSLPPTPPKTASPGNSK) and 50-93 (DSST…PTKR). Positions 50-64 (DSSTSSSCSVSPASS) are enriched in low complexity. The segment covering 70 to 89 (ESVGQQQSGRNSPVSSSTES) has biased composition (polar residues). The fork-head DNA-binding region spans 93–186 (RPKYSYNALI…ISNNCGKLRR (94 aa)).

It is found in the nucleus. The protein resides in the cytoplasm. Transcription factor. Plays a role in embryogenesis and later development, perhaps acting redundantly with forkhead protein fkh-2. The chain is Forkhead box protein pes-1 from Caenorhabditis elegans.